A 616-amino-acid chain; its full sequence is Dihydroxy-acid dehydratase (616 aa).

Asp81 serves as a coordination point for Mg(2+). Cys122 serves as a coordination point for [2Fe-2S] cluster. Asp123 and Lys124 together coordinate Mg(2+). At Lys124 the chain carries N6-carboxylysine. Cys195 serves as a coordination point for [2Fe-2S] cluster. Residue Glu491 coordinates Mg(2+). Catalysis depends on Ser517, which acts as the Proton acceptor.

Belongs to the IlvD/Edd family. Homodimer. It depends on [2Fe-2S] cluster as a cofactor. Mg(2+) is required as a cofactor.

It catalyses the reaction (2R)-2,3-dihydroxy-3-methylbutanoate = 3-methyl-2-oxobutanoate + H2O. It carries out the reaction (2R,3R)-2,3-dihydroxy-3-methylpentanoate = (S)-3-methyl-2-oxopentanoate + H2O. Its pathway is amino-acid biosynthesis; L-isoleucine biosynthesis; L-isoleucine from 2-oxobutanoate: step 3/4. The protein operates within amino-acid biosynthesis; L-valine biosynthesis; L-valine from pyruvate: step 3/4. Functionally, functions in the biosynthesis of branched-chain amino acids. Catalyzes the dehydration of (2R,3R)-2,3-dihydroxy-3-methylpentanoate (2,3-dihydroxy-3-methylvalerate) into 2-oxo-3-methylpentanoate (2-oxo-3-methylvalerate) and of (2R)-2,3-dihydroxy-3-methylbutanoate (2,3-dihydroxyisovalerate) into 2-oxo-3-methylbutanoate (2-oxoisovalerate), the penultimate precursor to L-isoleucine and L-valine, respectively. In Salmonella typhi, this protein is Dihydroxy-acid dehydratase.